The following is a 390-amino-acid chain: Mevalonate kinase (390 aa).

ATP-binding positions include lysine 16, serine 130, and 135–141 (GAGLGSS). Residues serine 141 and glutamate 193 each contribute to the Mg(2+) site. Aspartate 204 acts as the Proton acceptor in catalysis.

It belongs to the GHMP kinase family. Mevalonate kinase subfamily. It depends on Mg(2+) as a cofactor.

The protein resides in the cytoplasm. The enzyme catalyses (R)-mevalonate + ATP = (R)-5-phosphomevalonate + ADP + H(+). Its pathway is isoprenoid biosynthesis; isopentenyl diphosphate biosynthesis via mevalonate pathway; isopentenyl diphosphate from (R)-mevalonate: step 1/3. Its function is as follows. Catalyzes the phosphorylation of mevalonate to mevalonate 5-phosphate, a key step in isoprenoid biosynthesis. This chain is Mevalonate kinase, found in Dictyostelium discoideum (Social amoeba).